Consider the following 738-residue polypeptide: Leucine-rich repeat flightless-interacting protein 1 (738 aa).

Thr2 bears the N-acetylthreonine mark. Position 16 is a phosphoserine (Ser16). Residues Ile40–Ser65 show a composition bias toward basic and acidic residues. The interval Ile40 to Glu98 is disordered. A compositionally biased stretch (low complexity) spans Ser78–Ser94. Phosphoserine is present on residues Ser83, Ser84, Ser88, and Ser92. Residues Ser94–Lys194 are a coiled coil. Lys249 is covalently cross-linked (Glycyl lysine isopeptide (Lys-Gly) (interchain with G-Cter in SUMO1)). 2 stretches are compositionally biased toward basic and acidic residues: residues Val253 to Leu262 and Asp277 to Glu297. The disordered stretch occupies residues Val253–Ser738. Position 302 is a phosphoserine (Ser302). Residues Glu314–Leu326 show a composition bias toward polar residues. Residues Glu330 to Asn347 are compositionally biased toward basic and acidic residues. 2 positions are modified to phosphoserine: Ser346 and Ser348. Residues Lys371–Ser380 show a composition bias toward polar residues. Composition is skewed to basic and acidic residues over residues Gln381–His400 and Ser467–Ala476. Positions Glu479–Pro580 are DNA-binding. 2 stretches are compositionally biased toward polar residues: residues Thr483–Thr495 and Thr520–Thr534. The segment covering Asp535 to Gln553 has biased composition (basic and acidic residues). Residues Ser551 and Ser560 each carry the phosphoserine modification. Residues Lys563–Ala577 are compositionally biased toward basic residues. The span at Arg606 to Gln626 shows a compositional bias: basic and acidic residues. Residues Ser675 and Ser701 each carry the phosphoserine modification. Composition is skewed to basic and acidic residues over residues Gln691 to Asp703 and Glu720 to Ser738.

The protein belongs to the LRRFIP family. Homodimer. May also form higher oligomers. Interacts with FLII. Interacts with MYD88. Competes with FLII for MyD88-binding, even in the absence of LPS.

The protein localises to the nucleus. It localises to the cytoplasm. Transcriptional repressor which preferentially binds to the GC-rich consensus sequence (5'-AGCCCCCGGCG-3') and may regulate expression of TNF, EGFR and PDGFA. May control smooth muscle cells proliferation following artery injury through PDGFA repression. May also bind double-stranded RNA. Positively regulates Toll-like receptor (TLR) signaling in response to agonist probably by competing with the negative FLII regulator for MYD88-binding. This chain is Leucine-rich repeat flightless-interacting protein 1 (Lrrfip1), found in Rattus norvegicus (Rat).